Here is a 192-residue protein sequence, read N- to C-terminus: dCTP deaminase, dUMP-forming (192 aa).

Residues K101 to R106, D119, T127 to E129, Q148, Y162, and Q174 contribute to the dCTP site. The active-site Proton donor/acceptor is the E129. The segment at Y162–E192 is disordered. Over residues Y171–R181 the composition is skewed to polar residues. Positions S182–E192 are enriched in basic residues.

The protein belongs to the dCTP deaminase family. In terms of assembly, homotrimer.

It carries out the reaction dCTP + 2 H2O = dUMP + NH4(+) + diphosphate. The protein operates within pyrimidine metabolism; dUMP biosynthesis; dUMP from dCTP: step 1/1. Bifunctional enzyme that catalyzes both the deamination of dCTP to dUTP and the hydrolysis of dUTP to dUMP without releasing the toxic dUTP intermediate. This is dCTP deaminase, dUMP-forming from Beutenbergia cavernae (strain ATCC BAA-8 / DSM 12333 / CCUG 43141 / JCM 11478 / NBRC 16432 / NCIMB 13614 / HKI 0122).